A 110-amino-acid polypeptide reads, in one-letter code: Large ribosomal subunit protein uL22 (110 aa).

The protein belongs to the universal ribosomal protein uL22 family. In terms of assembly, part of the 50S ribosomal subunit.

Functionally, this protein binds specifically to 23S rRNA; its binding is stimulated by other ribosomal proteins, e.g. L4, L17, and L20. It is important during the early stages of 50S assembly. It makes multiple contacts with different domains of the 23S rRNA in the assembled 50S subunit and ribosome. Its function is as follows. The globular domain of the protein is located near the polypeptide exit tunnel on the outside of the subunit, while an extended beta-hairpin is found that lines the wall of the exit tunnel in the center of the 70S ribosome. The polypeptide is Large ribosomal subunit protein uL22 (Salmonella arizonae (strain ATCC BAA-731 / CDC346-86 / RSK2980)).